The following is a 102-amino-acid chain: Small ribosomal subunit protein uS17 (102 aa).

Positions 1 to 15 (MTDETASQEASQSTD) are enriched in polar residues. A disordered region spans residues 1 to 20 (MTDETASQEASQSTDAAAPA).

The protein belongs to the universal ribosomal protein uS17 family. In terms of assembly, part of the 30S ribosomal subunit.

One of the primary rRNA binding proteins, it binds specifically to the 5'-end of 16S ribosomal RNA. In Frankia casuarinae (strain DSM 45818 / CECT 9043 / HFP020203 / CcI3), this protein is Small ribosomal subunit protein uS17.